The sequence spans 859 residues: Glucans biosynthesis glucosyltransferase H (859 aa).

6 consecutive transmembrane segments (helical) span residues 144–166 (YILL…GILP), 200–222 (LLLF…MGFL), 523–545 (VMSY…LLAV), 573–595 (VALF…ILIW), 608–630 (VTVS…MLFH), and 684–706 (SFLW…SVIS).

It belongs to the glycosyltransferase 2 family. OpgH subfamily.

It localises to the cell inner membrane. It functions in the pathway glycan metabolism; osmoregulated periplasmic glucan (OPG) biosynthesis. Involved in the biosynthesis of osmoregulated periplasmic glucans (OPGs). In Pseudomonas syringae pv. tomato (strain ATCC BAA-871 / DC3000), this protein is Glucans biosynthesis glucosyltransferase H.